Consider the following 504-residue polypeptide: ATP-dependent RNA helicase DBP5 (504 aa).

Basic and acidic residues-rich tracts occupy residues 1–10 (MSATEDKKDP), 17–32 (LKLD…ETKT), and 41–85 (KTTE…ENKD). The tract at residues 1–85 (MSATEDKKDP…DAKDERENKD (85 aa)) is disordered. The Q motif motif lies at 114–142 (KSFDELGLSPELLKGIYAMKFQKPSKIQE). In terms of domain architecture, Helicase ATP-binding spans 147-314 (LLLSNPPRNM…QKVIPNANTL (168 aa)). Residue 160–167 (SQSGTGKT) participates in ATP binding. A DEAD box motif is present at residues 261-264 (DEAD). The Helicase C-terminal domain occupies 325–502 (AIKQLYMDCN…EVEDIVKKVL (178 aa)).

This sequence belongs to the DEAD box helicase family. DDX19/DBP5 subfamily. As to quaternary structure, associates with the nuclear pore complex.

The protein resides in the cytoplasm. Its subcellular location is the nucleus. It localises to the nuclear pore complex. It is found in the nucleus membrane. The enzyme catalyses ATP + H2O = ADP + phosphate + H(+). Functionally, ATP-dependent RNA helicase associated with the nuclear pore complex and essential for mRNA export from the nucleus. May participate in a terminal step of mRNA export through the removal of proteins that accompany mRNA through the nucleopore complex. May also be involved in early transcription. The protein is ATP-dependent RNA helicase DBP5 (DBP5) of Candida glabrata (strain ATCC 2001 / BCRC 20586 / JCM 3761 / NBRC 0622 / NRRL Y-65 / CBS 138) (Yeast).